The chain runs to 587 residues: MEIVYVYTRKRSEFGRQCNFSDRPAELHVDILPDPSQALNFIERNPCDVAIQCSHDMSEHEVNTERYDMEAHGINHVEGGWPKDINPQEMEQTIRFRKKVEKDDHYVTTISQLGSVMEHCIKQNNAINIYEEYFEETEELEGIDETPSANTVNVFRDPNEIKRTATHLSWHPDGNRKLAVAYSCLEFQRAPKDMNFESYIWDIEIPNKPELTLRPASPLVCLEYNPKDSHVLIGGCYNGQIAYWDTRKGGNPVESTVIEYSHRDPVYKVIWLQSKTGTECFSASTDGQILWWDIRKLSEPTEKLILDISKKENIDNALGAVSMEFEPTLPTKFMVGTEQGMIVSCNRKAKTPPEKIVCTYGGHHGPIYSIQRNPFFPKNFLTVGDWTARIWSEDCRESSIMWTKYHTSYLTDACWSPTRPTVFLTTKIDGTLDVWDYMYKQNNPSLSLKVSDEPLYNICMQDNGRFVACGSKMGVTTLMELSKGLYTLQRNERNLASAMFERETKREKILEARHREMRLKERSKAEPGEEVKDEKPAEDMKEIIANAEKDFFENIEAELKRKEQQEIKQSEDEHQEKEVSEEKIVHE.

WD repeat units follow at residues 214 to 254, 261 to 302, 362 to 401, and 405 to 445; these read RPAS…NPVE, SHRD…EPTE, GHHGPIYSIQRNPFFPKNFLTVGDWTARIWSEDCRESSIM, and YHTS…NNPS. Disordered stretches follow at residues 519 to 542 and 562 to 587; these read LKERSKAEPGEEVKDEKPAEDMKE and KEQQEIKQSEDEHQEKEVSEEKIVHE.

It belongs to the dynein intermediate chain family. As to quaternary structure, consists of at least two heavy chains and a number of intermediate and light chains. Interacts with DNAAF2. Interacts with DNAAF6/PIH1D3. Interacts with HEATR2; probably involved in outer arm dynein assembly. Interacts with C16ORF71/DAAP1.

Its subcellular location is the cytoplasm. The protein resides in the cytoskeleton. It is found in the cilium axoneme. It localises to the dynein axonemal particle. Its function is as follows. Part of the dynein complex of multiciliated cell cilia. This is Dynein axonemal intermediate chain 2 (dnai2) from Xenopus laevis (African clawed frog).